The following is a 242-amino-acid chain: Carbendazim hydrolyzing esterase (242 aa).

Residue serine 77 is the Acyl-ester intermediate of the active site.

This sequence belongs to the AB hydrolase superfamily.

It is found in the secreted. It catalyses the reaction carbendazim + H2O = 2-aminobenzimidazole + methanol + CO2. It carries out the reaction carbendazim + H2O = N-(1H-1,3-benzodiazol-2-yl)carbamate + methanol + H(+). The catalysed reaction is N-(1H-1,3-benzodiazol-2-yl)carbamate + H(+) = 2-aminobenzimidazole + CO2. Functionally, catalyzes the hydrolysis of the fungicide carbendazim (methyl-1H-benzimidazol-2-ylcarbamate or MBC) to 2-aminobenzimidazole (2-AB). Following hydrolysis of the carbamate ester, the carbamate decarboxylates spontaneously. Can hydrolyze model carboxylesters such as methyl salicylate, alpha-naphthyl acetate and p-nitrophenyl acetate. In addition, shows substantial hydrolytic activity in vitro against widespread pollutants with carboxylester, carbamate and amide linkages, such as dimethyl phthalate, propanil and chlorpropham. In Nocardioides sp. (strain SG-4G), this protein is Carbendazim hydrolyzing esterase.